Reading from the N-terminus, the 533-residue chain is DELLA protein GAI (533 aa).

Over residues 1–12 (MKRDHHHHHHQD) the composition is skewed to basic residues. Residues 1–24 (MKRDHHHHHHQDKKTMMMNEEDDG) form a disordered region. Residues 28–32 (DELLA) carry the DELLA motif motif. Positions 50-54 (LEQLE) match the LEXLE motif motif. A VHYNP motif motif is present at residues 73–77 (VHYNP). In terms of domain architecture, GRAS spans 160-529 (VDSQENGVRL…RPLIATSAWK (370 aa)). The leucine repeat I (LRI) stretch occupies residues 167–221 (VRLVHALLACAEAVQKENLTVAEALVKQIGFLAVSQIGAMRKVATYFAEALARRI). Residues 174 to 178 (LACAE) carry the LxCxE motif motif. The tract at residues 240 to 305 (QMHFYETCPY…GGPPVFRLTG (66 aa)) is VHIID. Residues 271-275 (VHVID) carry the VHIID motif. A leucine repeat II (LRII) region spans residues 319–351 (EVGCKLAHLAEAIHVEFEYRGFVANTLADLDAS). The tract at residues 363–450 (VAVNSVFELH…EVYLGKQICN (88 aa)) is PFYRE. An LXXLL motif motif is present at residues 371 to 375 (LHKLL). The segment at 453–529 (ACDGPDRVER…RPLIATSAWK (77 aa)) is SAW.

It belongs to the GRAS family. DELLA subfamily. Interacts directly with the GID2/SLY1 component of the SCF(GID2) complex. Interacts (via N-terminus) with GID1A, GID1B and GID1B (via N-terminus). Interacts with the BOI proteins BOI, BRG1, BRG2, BRG3 and NUP58. Interacts with TOPP4. Interacts with TCP14 and TCP15. Interacts with FLZ5. Binds to and coactivates GAF1/IDD2 and ENY/IDD1 at the promoter of GA20OX2 gene. Binds to PDF2 and ATML1. Interacts with the prefoldin alpha subunits PFD3 and PFD5 in the nucleus. Post-translationally, phosphorylated. Gibberellin (GA) induces dephosphorylation of GAI by TOPP4 and subsequent degradation by the proteasomal pathway. In terms of processing, may be ubiquitinated, as suggested by its interaction with GID2. Ubiquitination is however unsure since in contrast to other DELLA proteins, it is not ubiquitinated and degraded upon GA application. Nevertheless, ubiquitination may be triggered by other processes. In terms of tissue distribution, ubiquitously expressed. Expressed in rosette leaves, roots, stems and inflorescences of greenhouse grown.

Its subcellular location is the nucleus. With respect to regulation, transcription activation is repressed by gibberellic acid GA(3) in the presence of TPR4. Its function is as follows. Transcriptional regulator that acts as a repressor of the gibberellin (GA) signaling pathway. Transcription coactivator of the zinc finger transcription factors GAF1/IDD2 and ENY/IDD1 in regulation of gibberellin homeostasis and signaling. No effect of the BOI proteins on its stability. Probably acts by participating in large multiprotein complexes that repress transcription of GA-inducible genes. Positively regulates XERICO expression. In contrast to RGA, it is less sensitive to GA. Its activity is probably regulated by other phytohormones such as auxin and ethylene. Involved in the regulation of seed dormancy and germination, including glucose-induced delay of seed germination. Involved in the process leading to microtubules (MTs) dissociation in response to gibberellic acid (GA) probably by mediating the translocation of the prefoldin co-chaperone complex from the cytoplasm to the nucleus. The polypeptide is DELLA protein GAI (Arabidopsis thaliana (Mouse-ear cress)).